The chain runs to 213 residues: Kynurenine formamidase (213 aa).

Trp-18 is a binding site for substrate. Zn(2+) is bound by residues His-48, His-52, and Asp-54. The Proton donor/acceptor role is filled by His-58. Positions 160 and 172 each coordinate Zn(2+).

It belongs to the Cyclase 1 superfamily. KynB family. Homodimer. Requires Zn(2+) as cofactor.

The enzyme catalyses N-formyl-L-kynurenine + H2O = L-kynurenine + formate + H(+). The protein operates within amino-acid degradation; L-tryptophan degradation via kynurenine pathway; L-kynurenine from L-tryptophan: step 2/2. Its function is as follows. Catalyzes the hydrolysis of N-formyl-L-kynurenine to L-kynurenine, the second step in the kynurenine pathway of tryptophan degradation. The polypeptide is Kynurenine formamidase (Burkholderia multivorans (strain ATCC 17616 / 249)).